Consider the following 396-residue polypeptide: L-lactate dehydrogenase (396 aa).

The FMN hydroxy acid dehydrogenase domain maps to 1-380 (MIISAASDYR…SGDSLVQELG (380 aa)). Substrate is bound at residue Tyr-24. 2 residues coordinate FMN: Ser-106 and Gln-127. Residue Tyr-129 coordinates substrate. FMN is bound at residue Thr-155. Arg-164 is a substrate binding site. Position 251 (Lys-251) interacts with FMN. His-275 serves as the catalytic Proton acceptor. Arg-278 provides a ligand contact to substrate. 306–330 (DSGIRNGLDVVRMIALGADTVLLGR) is an FMN binding site.

It belongs to the FMN-dependent alpha-hydroxy acid dehydrogenase family. FMN serves as cofactor.

Its subcellular location is the cell inner membrane. The enzyme catalyses (S)-lactate + A = pyruvate + AH2. Its function is as follows. Catalyzes the conversion of L-lactate to pyruvate. Is coupled to the respiratory chain. In Salmonella paratyphi C (strain RKS4594), this protein is L-lactate dehydrogenase.